A 387-amino-acid polypeptide reads, in one-letter code: O-methyltransferase fsr2 (387 aa).

Asp-231 serves as a coordination point for S-adenosyl-L-methionine. His-280 acts as the Proton acceptor in catalysis.

This sequence belongs to the class I-like SAM-binding methyltransferase superfamily. Cation-independent O-methyltransferase family. COMT subfamily.

The protein operates within polyketide biosynthesis. Functionally, O-methyltransferase; part of the gene cluster that mediates the biosynthesis of fusarubins, highly pigmented naphthoquinones responsible for the coloration of the fruiting bodies. The non-reducing polyketide synthase FSR1 is responsible for the condensation of seven acetyl-CoA units to yield a haptaketide. After rings A and B are formed by aldol-type cyclization, the PKS-derived product is released as 6-O-demethylfusarubinaldehyde. Then, two hydroxyl groups at C-5 and C-10 are incorporated by FSR3, and simultaneously hydroxyl groups at C-6 and C-8 are methylated by FSR2. The aldehyde is, on the one hand, reduced by FSR3 to 8-O-methylfusarubin alcohol, which equilibrates mainly with 8-O-methylfusarubin and only small amounts of 8-O-methylnectriafurone. On the other hand, the aldehyde can be oxidized to form 8-O-methylfusarubinic acid, a reaction driven by FSR3 equilibrating with 8-O-methylfusarubinlactone, finally resulting in 8-O-methylanhydrofusarubinlactol after a further reduction step and loss of water. 8-O-Methylfusarubinic acid can also undergo decarboxylation, resulting in 8-O-methyl-13-hydroxynorjavanicin after another hydroxylation step at C-13. Both steps are most likely also accomplished by FSR3. No enzymatic function has been determined so far for either FSR4 and FSR5. Their deletion does not alter the product spectrum, but the possibility that they catalyze specific enzymatic steps during perithecium development cannot be ruled out. FSR4 might possess a regulatory function in the biosynthesis of fusarubins. The sequence is that of O-methyltransferase fsr2 from Gibberella fujikuroi (strain CBS 195.34 / IMI 58289 / NRRL A-6831) (Bakanae and foot rot disease fungus).